The primary structure comprises 161 residues: Large ribosomal subunit protein uL30m (161 aa).

A mitochondrion-targeting transit peptide spans 1 to 34; it reads MAGILRLVVQWPPGRLQTVTKGVESLICTDWIRH.

Belongs to the universal ribosomal protein uL30 family. In terms of assembly, component of the mitochondrial large ribosomal subunit (mt-LSU). Mature mammalian 55S mitochondrial ribosomes consist of a small (28S) and a large (39S) subunit. The 28S small subunit contains a 12S ribosomal RNA (12S mt-rRNA) and 30 different proteins. The 39S large subunit contains a 16S rRNA (16S mt-rRNA), a copy of mitochondrial valine transfer RNA (mt-tRNA(Val)), which plays an integral structural role, and 52 different proteins.

The protein resides in the mitochondrion. In Homo sapiens (Human), this protein is Large ribosomal subunit protein uL30m (MRPL30).